We begin with the raw amino-acid sequence, 196 residues long: Guanylate kinase (196 aa).

A disordered region spans residues 1-24 (MPVESGAGNDQPKRLTVLSGPSGV). The 179-residue stretch at 13-191 (KRLTVLSGPS…VCDELLALIA (179 aa)) folds into the Guanylate kinase-like domain. Residue 20-27 (GPSGVGKS) participates in ATP binding.

This sequence belongs to the guanylate kinase family.

The protein resides in the cytoplasm. The catalysed reaction is GMP + ATP = GDP + ADP. Essential for recycling GMP and indirectly, cGMP. The polypeptide is Guanylate kinase (Thermobifida fusca (strain YX)).